A 200-amino-acid chain; its full sequence is Peptidyl-tRNA hydrolase (200 aa).

A tRNA-binding site is contributed by tyrosine 17. Histidine 22 acts as the Proton acceptor in catalysis. Residues tyrosine 78, asparagine 80, and asparagine 126 each coordinate tRNA.

The protein belongs to the PTH family. Monomer.

The protein localises to the cytoplasm. The catalysed reaction is an N-acyl-L-alpha-aminoacyl-tRNA + H2O = an N-acyl-L-amino acid + a tRNA + H(+). Its function is as follows. Hydrolyzes ribosome-free peptidyl-tRNAs (with 1 or more amino acids incorporated), which drop off the ribosome during protein synthesis, or as a result of ribosome stalling. Catalyzes the release of premature peptidyl moieties from peptidyl-tRNA molecules trapped in stalled 50S ribosomal subunits, and thus maintains levels of free tRNAs and 50S ribosomes. In Cutibacterium acnes (strain DSM 16379 / KPA171202) (Propionibacterium acnes), this protein is Peptidyl-tRNA hydrolase.